Reading from the N-terminus, the 102-residue chain is Small ribosomal subunit protein uS10 (102 aa).

Belongs to the universal ribosomal protein uS10 family. As to quaternary structure, part of the 30S ribosomal subunit.

Its function is as follows. Involved in the binding of tRNA to the ribosomes. This is Small ribosomal subunit protein uS10 from Levilactobacillus brevis (strain ATCC 367 / BCRC 12310 / CIP 105137 / JCM 1170 / LMG 11437 / NCIMB 947 / NCTC 947) (Lactobacillus brevis).